The chain runs to 321 residues: MATH domain and coiled-coil domain-containing protein At3g58410 (321 aa).

The region spanning 6-128 (GKKFAWVIKN…NGELMIVAEV (123 aa)) is the MATH domain. A coiled-coil region spans residues 255-310 (KVDWLEKKLDQVRDKKEKERSCLAKLQETEETLLKLKQKCTELDALMDTEKAELSA).

In Arabidopsis thaliana (Mouse-ear cress), this protein is MATH domain and coiled-coil domain-containing protein At3g58410.